Consider the following 157-residue polypeptide: SsrA-binding protein (157 aa).

Positions 135–151 are enriched in basic and acidic residues; that stretch reads DKRETEKKRDWSREKGR. Residues 135–157 form a disordered region; sequence DKRETEKKRDWSREKGRLLRARG.

The protein belongs to the SmpB family.

Its subcellular location is the cytoplasm. Functionally, required for rescue of stalled ribosomes mediated by trans-translation. Binds to transfer-messenger RNA (tmRNA), required for stable association of tmRNA with ribosomes. tmRNA and SmpB together mimic tRNA shape, replacing the anticodon stem-loop with SmpB. tmRNA is encoded by the ssrA gene; the 2 termini fold to resemble tRNA(Ala) and it encodes a 'tag peptide', a short internal open reading frame. During trans-translation Ala-aminoacylated tmRNA acts like a tRNA, entering the A-site of stalled ribosomes, displacing the stalled mRNA. The ribosome then switches to translate the ORF on the tmRNA; the nascent peptide is terminated with the 'tag peptide' encoded by the tmRNA and targeted for degradation. The ribosome is freed to recommence translation, which seems to be the essential function of trans-translation. This Rhodopseudomonas palustris (strain BisB5) protein is SsrA-binding protein.